A 156-amino-acid polypeptide reads, in one-letter code: Small ribosomal subunit protein uS7 (156 aa).

It belongs to the universal ribosomal protein uS7 family. As to quaternary structure, part of the 30S ribosomal subunit. Contacts proteins S9 and S11.

Functionally, one of the primary rRNA binding proteins, it binds directly to 16S rRNA where it nucleates assembly of the head domain of the 30S subunit. Is located at the subunit interface close to the decoding center, probably blocks exit of the E-site tRNA. The chain is Small ribosomal subunit protein uS7 from Photorhabdus laumondii subsp. laumondii (strain DSM 15139 / CIP 105565 / TT01) (Photorhabdus luminescens subsp. laumondii).